The sequence spans 380 residues: Queuine tRNA-ribosyltransferase (380 aa).

Catalysis depends on Asp93, which acts as the Proton acceptor. Substrate contacts are provided by residues 93–97 (DSGGF), Asp147, Gln198, and Gly225. Residues 256–262 (GVGLPSN) are RNA binding. Asp275 (nucleophile) is an active-site residue. The segment at 280–284 (ARNGR) is RNA binding; important for wobble base 34 recognition. Residues Cys313, Cys315, Cys318, and His344 each coordinate Zn(2+).

It belongs to the queuine tRNA-ribosyltransferase family. Homodimer. Within each dimer, one monomer is responsible for RNA recognition and catalysis, while the other monomer binds to the replacement base PreQ1. The cofactor is Zn(2+).

It carries out the reaction 7-aminomethyl-7-carbaguanine + guanosine(34) in tRNA = 7-aminomethyl-7-carbaguanosine(34) in tRNA + guanine. The protein operates within tRNA modification; tRNA-queuosine biosynthesis. In terms of biological role, catalyzes the base-exchange of a guanine (G) residue with the queuine precursor 7-aminomethyl-7-deazaguanine (PreQ1) at position 34 (anticodon wobble position) in tRNAs with GU(N) anticodons (tRNA-Asp, -Asn, -His and -Tyr). Catalysis occurs through a double-displacement mechanism. The nucleophile active site attacks the C1' of nucleotide 34 to detach the guanine base from the RNA, forming a covalent enzyme-RNA intermediate. The proton acceptor active site deprotonates the incoming PreQ1, allowing a nucleophilic attack on the C1' of the ribose to form the product. After dissociation, two additional enzymatic reactions on the tRNA convert PreQ1 to queuine (Q), resulting in the hypermodified nucleoside queuosine (7-(((4,5-cis-dihydroxy-2-cyclopenten-1-yl)amino)methyl)-7-deazaguanosine). In Clostridium perfringens (strain 13 / Type A), this protein is Queuine tRNA-ribosyltransferase.